Consider the following 63-residue polypeptide: MNQLNQFILIFLLLIVILFIFFLIPKKEPEIKTFAYEVPIRYSNPRSLYSLPKWKTFYGRNWL.

A helical transmembrane segment spans residues 4–24; it reads LNQFILIFLLLIVILFIFFLI.

Its subcellular location is the membrane. This is an uncharacterized protein from Invertebrate iridescent virus 6 (IIV-6).